A 2474-amino-acid chain; its full sequence is Highly reducing polyketide synthase 40 (2474 aa).

Positions 1 to 294 (MFKETEIQQR…GSNAHIIIDD (294 aa)) constitute a Ketosynthase family 3 (KS3) domain. Residues C42, H177, and H217 each act as for beta-ketoacyl synthase activity in the active site. Residues 459–798 (FVFTGQGAQW…GYESVLRRGT (340 aa)) enclose the Malonyl-CoA:ACP transacylase (MAT) domain. An N-terminal hotdog fold region spans residues 864–998 (HELLGAPVPD…GLVVTEYEQP (135 aa)). Residues 864–1182 (HELLGAPVPD…ITTVARSEGA (319 aa)) enclose the PKS/mFAS DH domain. H896 acts as the Proton acceptor; for dehydratase activity in catalysis. The segment at 1027–1182 (KVETSFRQLY…ITTVARSEGA (156 aa)) is C-terminal hotdog fold. The Proton donor; for dehydratase activity role is filled by D1093. The interval 1232 to 1535 (VEMMCFLYIK…DLHIYDFPDH (304 aa)) is methyltransferase (CMet) domain. Positions 1770–2063 (GLLDSLQFQD…SGSHMGKLVL (294 aa)) constitute an Enoyl reductase (ER) domain. The 177-residue stretch at 2087–2263 (ASYLLSGGLG…PGVAVDLGMI (177 aa)) folds into the Ketoreductase (KR) domain. The 78-residue stretch at 2385–2462 (DAAKIVSAAI…ELAELAAKRS (78 aa)) folds into the Carrier domain. O-(pantetheine 4'-phosphoryl)serine is present on S2422.

Pantetheine 4'-phosphate serves as cofactor.

The protein operates within secondary metabolite biosynthesis. Functionally, highly reducing polyketide synthase; part of the gene cluster that mediates the biosynthesis of the gamma-pyrones fusapyrone (FPY) and deoxyfusapyrone (dFPY). FPY is an undecaketide and thus likely synthesized by the polyketide synthase FPY1 from acetyl-CoA functioning as starter unit and the addition of 10 malonyl-CoA extender units by successive Claisen-condensations. Next to this, FPY shares some rare features: C-glycosylated 4-deoxyglucose at C-3, a gem-dimethyl group at C-13, and an alpha-beta to beta-gamma double bond shift at C-20. During FPY biosynthesis mono-C-methyl groups are transferred to the tetra-, penta-, hexa- and heptaketide, while two C-methyl groups are transferred to the nonaketide, suggesting that the CMet domain is programmed to selectively catalyze two successive C-alpha-methylation reactions of the nonaketide, while other alpha-carbons are non- or mono-methylated only. While the origin of the 4'-deoxyglucose moiety remains opaque, its transfer to C-3 is most likely mediated by the C-glycosyltransferase FPY2. Next to this, the hydroxyl group present at C-33 and discriminating between FPY and dFPY, is likely to be installed by the cytochrome P450 monooxygenase FPY7. No putative function can be predicted for the remaining genes FPY3-FPY6. In Fusarium mangiferae (Mango malformation disease fungus), this protein is Highly reducing polyketide synthase 40.